Here is a 340-residue protein sequence, read N- to C-terminus: MALDASSLTRKLHVFSAKYVKISEETTRRARRLVKDYIEGQIIAYITENSNIEIQKLEYTGSFYEGLKTENADEADIMVVLKTPGSGIEVVQSQVPGYVHLKARDAPMFSKYMSPKGYIKAKKLRNSWFQSYVRRAVNKIEPQPPHSEVRLVVRSHGPAVQVDIIRKGSEEMLLSVDLVPCFQVEDSWYVPKPFKGKRYLSRNELLWRKTFSPKEKQILASMDKDPNGQGGCRHELLRIVKTVVKKPVTSLPLDSYHLKAAFMHYNDRGDLDWVSEDALGKNFFGFLMELQIRMESRNLPNYWLDGINLLDDFKEDVVKQMANRLRRILNSEVRLNKILE.

ATP is bound by residues Ser62 and 74–76 (EAD). Mg(2+) is bound by residues Glu74, Asp76, and Asp177. ATP-binding positions include Lys241 and 255–259 (SYHLK). Mn(2+) is bound by residues Asp267 and Asp270.

Belongs to the mab-21 family. It depends on Mg(2+) as a cofactor. Requires Mn(2+) as cofactor.

It carries out the reaction 2 ATP = 3',3'-c-di-AMP + 2 diphosphate. Its function is as follows. Nucleotidyltransferase that catalyzes the formation of cyclic di-AMP (3',3'-c-di-AMP) from 2 molecules of ATP and plays a key role in innate immunity. Acts as a key sensor of double-stranded RNA (dsRNA), the presence of dsRNA in the cytoplasm being a danger signal that triggers the immune responses. Directly binds dsRNA, activating the nucleotidyltransferase activity, leading to synthesis of 3',3'-c-di-AMP, a second messenger that binds to and activates Sting, thereby triggering the immune response via activation of the NF-kappa-B transcription factor. This chain is Cyclic GMP-AMP synthase-like receptor 3, found in Stylophora pistillata (Smooth cauliflower coral).